We begin with the raw amino-acid sequence, 256 residues long: Type III pantothenate kinase (256 aa).

Residue 6–13 coordinates ATP; that stretch reads DVGNSHIY. Residues Y99 and 106 to 109 each bind substrate; that span reads GADR. D108 functions as the Proton acceptor in the catalytic mechanism. K(+) is bound at residue D129. ATP is bound at residue T132. Residue T184 participates in substrate binding.

This sequence belongs to the type III pantothenate kinase family. As to quaternary structure, homodimer. NH4(+) is required as a cofactor. The cofactor is K(+).

It is found in the cytoplasm. It carries out the reaction (R)-pantothenate + ATP = (R)-4'-phosphopantothenate + ADP + H(+). It participates in cofactor biosynthesis; coenzyme A biosynthesis; CoA from (R)-pantothenate: step 1/5. Catalyzes the phosphorylation of pantothenate (Pan), the first step in CoA biosynthesis. This is Type III pantothenate kinase from Legionella pneumophila (strain Paris).